The following is a 101-amino-acid chain: MQLQYFLLIAAALFCIGVYGLVTSRNAVRVLMSIELMLNAVNLNLMAFSNYLDPQEIKGQMFTIFVITIAAAEAAVGLAIVLAIYRNRDTVDMEQFNLLKW.

3 helical membrane passes run 3–23 (LQYFLLIAAALFCIGVYGLVT), 30–50 (VLMSIELMLNAVNLNLMAFSN), and 64–84 (IFVITIAAAEAAVGLAIVLAI).

It belongs to the complex I subunit 4L family. NDH-1 can be composed of about 15 different subunits; different subcomplexes with different compositions have been identified which probably have different functions.

The protein resides in the cellular thylakoid membrane. It catalyses the reaction a plastoquinone + NADH + (n+1) H(+)(in) = a plastoquinol + NAD(+) + n H(+)(out). The enzyme catalyses a plastoquinone + NADPH + (n+1) H(+)(in) = a plastoquinol + NADP(+) + n H(+)(out). NDH-1 shuttles electrons from an unknown electron donor, via FMN and iron-sulfur (Fe-S) centers, to quinones in the respiratory and/or the photosynthetic chain. The immediate electron acceptor for the enzyme in this species is believed to be plastoquinone. Couples the redox reaction to proton translocation, and thus conserves the redox energy in a proton gradient. Cyanobacterial NDH-1 also plays a role in inorganic carbon-concentration. The protein is NAD(P)H-quinone oxidoreductase subunit 4L of Leptolyngbya boryana (Plectonema boryanum).